Reading from the N-terminus, the 361-residue chain is Anthranilate phosphoribosyltransferase (361 aa).

5-phospho-alpha-D-ribose 1-diphosphate contacts are provided by residues Gly101, 104–105 (GD), Thr109, 111–114 (NIST), 129–137 (KHGNRGVSS), and Ser141. An anthranilate-binding site is contributed by Gly101. Ser113 serves as a coordination point for Mg(2+). Asn132 is an anthranilate binding site. Arg187 provides a ligand contact to anthranilate. Asp245 and Glu246 together coordinate Mg(2+).

It belongs to the anthranilate phosphoribosyltransferase family. In terms of assembly, homodimer. Mg(2+) serves as cofactor.

It carries out the reaction N-(5-phospho-beta-D-ribosyl)anthranilate + diphosphate = 5-phospho-alpha-D-ribose 1-diphosphate + anthranilate. Its pathway is amino-acid biosynthesis; L-tryptophan biosynthesis; L-tryptophan from chorismate: step 2/5. Catalyzes the transfer of the phosphoribosyl group of 5-phosphorylribose-1-pyrophosphate (PRPP) to anthranilate to yield N-(5'-phosphoribosyl)-anthranilate (PRA). This chain is Anthranilate phosphoribosyltransferase, found in Shewanella denitrificans (strain OS217 / ATCC BAA-1090 / DSM 15013).